The sequence spans 617 residues: Tetratricopeptide repeat protein 39B (617 aa).

TPR repeat units follow at residues 328–361 and 561–594; these read SLIL…QEEW and PFTL…YKDY.

This sequence belongs to the TTC39 family.

Functionally, regulates high density lipoprotein (HDL) cholesterol metabolism by promoting the ubiquitination and degradation of the oxysterols receptors LXR (NR1H2 and NR1H3). The chain is Tetratricopeptide repeat protein 39B (Ttc39b) from Rattus norvegicus (Rat).